A 148-amino-acid polypeptide reads, in one-letter code: Endoribonuclease YbeY (148 aa).

The Zn(2+) site is built by histidine 112, histidine 116, and histidine 122.

Belongs to the endoribonuclease YbeY family. Requires Zn(2+) as cofactor.

The protein resides in the cytoplasm. In terms of biological role, single strand-specific metallo-endoribonuclease involved in late-stage 70S ribosome quality control and in maturation of the 3' terminus of the 16S rRNA. This is Endoribonuclease YbeY from Albidiferax ferrireducens (strain ATCC BAA-621 / DSM 15236 / T118) (Rhodoferax ferrireducens).